A 237-amino-acid polypeptide reads, in one-letter code: Class B acid phosphatase (237 aa).

Residues methionine 1–alanine 25 form the signal peptide. Aspartate 69 acts as the Nucleophile in catalysis. 2 residues coordinate Mg(2+): aspartate 69 and aspartate 71. The Proton donor role is filled by aspartate 71. Substrate-binding positions include threonine 137–glycine 138 and lysine 177. Residue aspartate 192 participates in Mg(2+) binding.

This sequence belongs to the class B bacterial acid phosphatase family. Homotetramer. Mg(2+) is required as a cofactor.

It localises to the periplasm. It carries out the reaction a phosphate monoester + H2O = an alcohol + phosphate. Dephosphorylates several organic phosphate monoesters. Also has a phosphotransferase activity catalyzing the transfer of low-energy phosphate groups from organic phosphate monoesters to free hydroxyl groups of various organic compounds. The protein is Class B acid phosphatase of Enterobacter sp. (strain 638).